Consider the following 631-residue polypeptide: Interferon-induced GTP-binding protein Mx1 (631 aa).

The 274-residue stretch at 33-306 (DLALPAIAVI…LTSHICKSLP (274 aa)) folds into the Dynamin-type G domain. The G1 motif stretch occupies residues 43–50 (GDQSSGKS). A GTP-binding site is contributed by 43 to 50 (GDQSSGKS). Residues 68–70 (VTR) form a G2 motif region. Positions 144–147 (DLPG) are G3 motif. GTP is bound by residues 144–148 (DLPGI) and 213–216 (TKPD). The interval 213 to 216 (TKPD) is G4 motif. Residues 245 to 248 (KCRG) are G5 motif. A bundle signaling element (BSE) region spans residues 307-332 (LLEDQINSSHQSASEELQKYGADIPE). Positions 332–499 (EDDRTRMSFL…HFQMEQIVYC (168 aa)) are middle domain. The tract at residues 333-601 (DDRTRMSFLV…TSKCSWFLEE (269 aa)) is stalk. The critical for lipid-binding stretch occupies residues 520 to 522 (KTK). The GED domain occupies 543–631 (TTEMTQHLKA…ARQKLAKFSD (89 aa)).

It belongs to the TRAFAC class dynamin-like GTPase superfamily. Dynamin/Fzo/YdjA family. Homooligomer. Oligomerizes into multimeric filamentous or ring-like structures by virtue of its stalk domain. Oligomerization is critical for GTPase activity, protein stability, and recognition of viral target structures. Interacts with TRPC1, TRPC3, TRPC4, TRPC5, TRPC6 and TRPC7. Interacts with HSPA5. Interacts with TUBB/TUBB5. Interacts with DDX39A and DDX39B. ISGylated.

It is found in the cytoplasm. It localises to the nucleus. Its subcellular location is the endoplasmic reticulum membrane. The protein localises to the perinuclear region. Its function is as follows. Interferon-induced dynamin-like GTPase with antiviral activity against influenza A virus, (IAV), influenza B virus (IBV) and Thogoto virus (THOV). Inhibits FLUAV by interfering with the process of primary transcription, probably by affecting the viral polymerase function. The protein is Interferon-induced GTP-binding protein Mx1 (Mx1) of Mus musculus (Mouse).